The sequence spans 181 residues: MGGFFSSIFSSLFGTREMRILILGLDGAGKTTILYRLQVGEVVTTIPTIGFNVETVTYKNLKFQVWDLGGQTSIRPYWRCYYSNTDAVIYVVDSCDRDRIGISKSELVAMLEEEELRKAILVVFANKQDMEQAMTPSEMANSLGLPALKDRKWQIFKTSATKGTGLDEAMEWLVETLKSRQ.

Glycine 2 carries the N-myristoyl glycine lipid modification. GTP is bound by residues 24 to 31 (GLDGAGKT), 45 to 48 (TIPT), glycine 70, 126 to 129 (NKQD), and 160 to 161 (AT). Threonine 31 and threonine 48 together coordinate Mg(2+).

This sequence belongs to the small GTPase superfamily. Arf family. As to quaternary structure, the GTP-bound form interacts with GOLGA1. The GTP-bound form interacts with GOLGA4 and RGPD8. The GTP-bound form directly interacts with ARFIP2. Binds to SCOC, preferentially in its GTP-bound form. May interact with UNC119. Interacts with ARFIP1; this interaction directs ARFIP1 to the trans-Golgi membranes. Interacts with ARFGEF1 (via N-terminus).

It is found in the golgi apparatus membrane. The protein localises to the golgi apparatus. The protein resides in the trans-Golgi network membrane. It localises to the membrane. Functionally, GTP-binding protein that recruits several effectors, such as golgins, arfaptins and Arf-GEFs to the trans-Golgi network, and modulates their functions at the Golgi complex. Plays thereby a role in a wide range of fundamental cellular processes, including cell polarity, innate immunity, or protein secretion mediated by arfaptins, which were shown to play a role in maintaining insulin secretion from pancreatic beta cells. This chain is ADP-ribosylation factor-like protein 1 (ARL1), found in Bos taurus (Bovine).